The following is a 423-amino-acid chain: Adenylosuccinate synthetase (423 aa).

Residues 12–18 (GDEGKGK) and 40–42 (GHT) contribute to the GTP site. The Proton acceptor role is filled by Asp-13. The Mg(2+) site is built by Asp-13 and Gly-40. IMP-binding positions include 13–16 (DEGK), 38–41 (NAGH), Thr-129, Arg-143, Gln-224, Thr-239, and Arg-303. His-41 (proton donor) is an active-site residue. 299 to 305 (SVTGRQR) contacts substrate. GTP contacts are provided by residues Arg-305, 331-333 (KGD), and 412-414 (SVG).

It belongs to the adenylosuccinate synthetase family. As to quaternary structure, homodimer. The cofactor is Mg(2+).

It is found in the cytoplasm. The catalysed reaction is IMP + L-aspartate + GTP = N(6)-(1,2-dicarboxyethyl)-AMP + GDP + phosphate + 2 H(+). It functions in the pathway purine metabolism; AMP biosynthesis via de novo pathway; AMP from IMP: step 1/2. Its function is as follows. Plays an important role in the de novo pathway of purine nucleotide biosynthesis. Catalyzes the first committed step in the biosynthesis of AMP from IMP. In Flavobacterium johnsoniae (strain ATCC 17061 / DSM 2064 / JCM 8514 / BCRC 14874 / CCUG 350202 / NBRC 14942 / NCIMB 11054 / UW101) (Cytophaga johnsonae), this protein is Adenylosuccinate synthetase.